A 78-amino-acid polypeptide reads, in one-letter code: DNA gyrase inhibitor YacG (78 aa).

Positions 7, 10, 26, and 30 each coordinate Zn(2+).

The protein belongs to the DNA gyrase inhibitor YacG family. In terms of assembly, interacts with GyrB. Zn(2+) is required as a cofactor.

Inhibits all the catalytic activities of DNA gyrase by preventing its interaction with DNA. Acts by binding directly to the C-terminal domain of GyrB, which probably disrupts DNA binding by the gyrase. The polypeptide is DNA gyrase inhibitor YacG (Colwellia psychrerythraea (strain 34H / ATCC BAA-681) (Vibrio psychroerythus)).